Consider the following 137-residue polypeptide: Large ribosomal subunit protein uL22 (137 aa).

The protein belongs to the universal ribosomal protein uL22 family. In terms of assembly, part of the 50S ribosomal subunit.

In terms of biological role, this protein binds specifically to 23S rRNA; its binding is stimulated by other ribosomal proteins, e.g. L4, L17, and L20. It is important during the early stages of 50S assembly. It makes multiple contacts with different domains of the 23S rRNA in the assembled 50S subunit and ribosome. The globular domain of the protein is located near the polypeptide exit tunnel on the outside of the subunit, while an extended beta-hairpin is found that lines the wall of the exit tunnel in the center of the 70S ribosome. This Flavobacterium psychrophilum (strain ATCC 49511 / DSM 21280 / CIP 103535 / JIP02/86) protein is Large ribosomal subunit protein uL22.